The sequence spans 41 residues: Photosystem II reaction center protein Y (41 aa).

The helical transmembrane segment at 5–23 (VLIVLAPVIIAGSWALFNI) threads the bilayer.

This sequence belongs to the PsbY family. In terms of assembly, PSII is composed of 1 copy each of membrane proteins PsbA, PsbB, PsbC, PsbD, PsbE, PsbF, PsbH, PsbI, PsbJ, PsbK, PsbL, PsbM, PsbT, PsbX, PsbY, PsbZ, Psb30/Ycf12, peripheral proteins PsbO, CyanoQ (PsbQ), PsbU, PsbV and a large number of cofactors. It forms dimeric complexes.

It is found in the cellular thylakoid membrane. Its function is as follows. Loosely associated component of the core of photosystem II (PSII), it is not always seen in crystals. PSII is a light-driven water plastoquinone oxidoreductase, using light energy to abstract electrons from H(2)O, generating a proton gradient subsequently used for ATP formation. The polypeptide is Photosystem II reaction center protein Y (Gloeothece citriformis (strain PCC 7424) (Cyanothece sp. (strain PCC 7424))).